We begin with the raw amino-acid sequence, 507 residues long: Maturase K (507 aa).

It belongs to the intron maturase 2 family. MatK subfamily.

The protein localises to the plastid. Its subcellular location is the chloroplast. Its function is as follows. Usually encoded in the trnK tRNA gene intron. Probably assists in splicing its own and other chloroplast group II introns. The protein is Maturase K of Asimina triloba (Pawpaw).